Consider the following 380-residue polypeptide: GDSL esterase/lipase At3g26430 (380 aa).

Residues 1 to 25 form the signal peptide; the sequence is METNLLLVKCVLLASCLIHPRACSP. Residue Ser-38 is the Nucleophile of the active site. N-linked (GlcNAc...) asparagine glycosylation is found at Asn-97, Asn-115, and Asn-183. Catalysis depends on residues Asp-346 and His-349.

It belongs to the 'GDSL' lipolytic enzyme family.

The protein localises to the secreted. It catalyses the reaction hexadecanoate ester + H2O = an aliphatic alcohol + hexadecanoate + H(+). It carries out the reaction a butanoate ester + H2O = an aliphatic alcohol + butanoate + H(+). Its activity is regulated as follows. Lipase activity is inhibited by phenylmethylsulfonyl fluoride (PMSF), but not neostigmine bromide (NB). Lipase that can hydrolyze p-nitrophenyl butyrate and p-nitrophenyl palmitate in vitro. Possesses low activity against p-nitrophenyl acetate. Substrate preference is p-nitrophenyl palmitate &gt; p-nitrophenyl butyrate &gt;&gt; p-nitrophenyl acetate. Lacks cholinesterase activity. In Arabidopsis thaliana (Mouse-ear cress), this protein is GDSL esterase/lipase At3g26430.